Reading from the N-terminus, the 122-residue chain is Large ribosomal subunit protein bL19 (122 aa).

Belongs to the bacterial ribosomal protein bL19 family.

Its function is as follows. This protein is located at the 30S-50S ribosomal subunit interface and may play a role in the structure and function of the aminoacyl-tRNA binding site. This Synechocystis sp. (strain ATCC 27184 / PCC 6803 / Kazusa) protein is Large ribosomal subunit protein bL19 (rplS).